The primary structure comprises 189 residues: Pyridoxal 5'-phosphate synthase subunit PdxT (189 aa).

47–49 is a binding site for L-glutamine; it reads GES. Cys-79 (nucleophile) is an active-site residue. Residues Arg-106 and 135 to 136 each bind L-glutamine; that span reads IR. Catalysis depends on charge relay system residues His-171 and Glu-173.

Belongs to the glutaminase PdxT/SNO family. As to quaternary structure, in the presence of PdxS, forms a dodecamer of heterodimers. Only shows activity in the heterodimer.

The enzyme catalyses aldehydo-D-ribose 5-phosphate + D-glyceraldehyde 3-phosphate + L-glutamine = pyridoxal 5'-phosphate + L-glutamate + phosphate + 3 H2O + H(+). The catalysed reaction is L-glutamine + H2O = L-glutamate + NH4(+). It functions in the pathway cofactor biosynthesis; pyridoxal 5'-phosphate biosynthesis. Its function is as follows. Catalyzes the hydrolysis of glutamine to glutamate and ammonia as part of the biosynthesis of pyridoxal 5'-phosphate. The resulting ammonia molecule is channeled to the active site of PdxS. In Caldanaerobacter subterraneus subsp. tengcongensis (strain DSM 15242 / JCM 11007 / NBRC 100824 / MB4) (Thermoanaerobacter tengcongensis), this protein is Pyridoxal 5'-phosphate synthase subunit PdxT.